An 884-amino-acid chain; its full sequence is Alanine--tRNA ligase (884 aa).

Residues H565, H569, C672, and H676 each coordinate Zn(2+).

The protein belongs to the class-II aminoacyl-tRNA synthetase family. Requires Zn(2+) as cofactor.

Its subcellular location is the cytoplasm. The enzyme catalyses tRNA(Ala) + L-alanine + ATP = L-alanyl-tRNA(Ala) + AMP + diphosphate. In terms of biological role, catalyzes the attachment of alanine to tRNA(Ala) in a two-step reaction: alanine is first activated by ATP to form Ala-AMP and then transferred to the acceptor end of tRNA(Ala). Also edits incorrectly charged Ser-tRNA(Ala) and Gly-tRNA(Ala) via its editing domain. This is Alanine--tRNA ligase from Sphingopyxis alaskensis (strain DSM 13593 / LMG 18877 / RB2256) (Sphingomonas alaskensis).